A 375-amino-acid polypeptide reads, in one-letter code: Succinyl-diaminopimelate desuccinylase (375 aa).

H66 lines the Zn(2+) pocket. The active site involves D68. D99 contacts Zn(2+). E133 functions as the Proton acceptor in the catalytic mechanism. Zn(2+) contacts are provided by E134, E162, and H348.

The protein belongs to the peptidase M20A family. DapE subfamily. As to quaternary structure, homodimer. The cofactor is Zn(2+). Co(2+) serves as cofactor.

The catalysed reaction is N-succinyl-(2S,6S)-2,6-diaminopimelate + H2O = (2S,6S)-2,6-diaminopimelate + succinate. Its pathway is amino-acid biosynthesis; L-lysine biosynthesis via DAP pathway; LL-2,6-diaminopimelate from (S)-tetrahydrodipicolinate (succinylase route): step 3/3. In terms of biological role, catalyzes the hydrolysis of N-succinyl-L,L-diaminopimelic acid (SDAP), forming succinate and LL-2,6-diaminopimelate (DAP), an intermediate involved in the bacterial biosynthesis of lysine and meso-diaminopimelic acid, an essential component of bacterial cell walls. The sequence is that of Succinyl-diaminopimelate desuccinylase from Escherichia coli (strain SE11).